A 317-amino-acid chain; its full sequence is Transaldolase (317 aa).

The Schiff-base intermediate with substrate role is filled by K126.

This sequence belongs to the transaldolase family. Type 1 subfamily. Homodimer.

The protein localises to the cytoplasm. It catalyses the reaction D-sedoheptulose 7-phosphate + D-glyceraldehyde 3-phosphate = D-erythrose 4-phosphate + beta-D-fructose 6-phosphate. The protein operates within carbohydrate degradation; pentose phosphate pathway; D-glyceraldehyde 3-phosphate and beta-D-fructose 6-phosphate from D-ribose 5-phosphate and D-xylulose 5-phosphate (non-oxidative stage): step 2/3. Functionally, transaldolase is important for the balance of metabolites in the pentose-phosphate pathway. This is Transaldolase from Burkholderia orbicola (strain MC0-3).